The following is a 390-amino-acid chain: Fluoride export protein 1 (390 aa).

Residues 1 to 22 (MVAPLVSESQSSSIEETDEQQQ) form a disordered region. The Cytoplasmic portion of the chain corresponds to 1–72 (MVAPLVSESQ…RFLDKTQKYY (72 aa)). The chain crosses the membrane as a helical span at residues 73–93 (PVILNIVHGAIWGVLVRKGLM). Topologically, residues 94–100 (SLTTYSG) are extracellular. Residues 101–121 (SFLSGVIWANFAACVVMGLAI) traverse the membrane as a helical segment. Residues 122 to 143 (DGEVFWIRLLEEKDYPNKGAIP) are Cytoplasmic-facing. Residues 144 to 164 (VYTGLTTGFCGTVSSFSSVIL) traverse the membrane as a helical segment. The Extracellular portion of the chain corresponds to 165-185 (EAFNKAADTDIGVRHHYPNGA). A helical membrane pass occupies residues 186–206 (YGIMQFLAVILAQFGLSIMGF). Over 207-229 (HMGKQFSAVVDNYLPLVTKRIYK) the chain is Cytoplasmic. A helical membrane pass occupies residues 230–250 (VLELTSMILGVVLVVITCILI). Residues 251–256 (GVKKQG) are Extracellular-facing. The helical transmembrane segment at 257 to 279 (SWRSWTFSMLFAPFGALLRYYLS) threads the bilayer. Topologically, residues 280 to 290 (KFLNNKVSNFP) are cytoplasmic. The helical transmembrane segment at 291–311 (LGTFTANFLGTLLLAVFTLLA) threads the bilayer. Topologically, residues 312 to 338 (RGKLPGGKGHIVTNTIALHVLEGLDDG) are extracellular. A helical transmembrane segment spans residues 339–359 (FCGGLTTVSTFVVELFGLKTL). Residues 360–368 (FSYRYGTIS) lie on the Cytoplasmic side of the membrane. The helical transmembrane segment at 369–389 (ILVCFAGVVLILGSYNWSVGL) threads the bilayer. Residue Asp390 is a topological domain, extracellular.

The protein belongs to the fluoride channel Fluc/FEX (TC 1.A.43) family.

It localises to the cell membrane. It carries out the reaction fluoride(in) = fluoride(out). In terms of biological role, fluoride channel required for the rapid expulsion of cytoplasmic fluoride. This is Fluoride export protein 1 from Candida albicans (strain SC5314 / ATCC MYA-2876) (Yeast).